We begin with the raw amino-acid sequence, 360 residues long: NAD(P)H-quinone oxidoreductase subunit 1, chloroplastic (360 aa).

Transmembrane regions (helical) follow at residues 27 to 47 (VWIF…VLVI), 98 to 118 (FSIG…VIPF), 129 to 149 (IGIF…LMSG), 165 to 185 (AAQS…ISLL), 203 to 223 (FWGW…ISSL), 253 to 273 (FGLF…FVTI), 297 to 317 (VFGT…VLVI), and 340 to 360 (FLLP…LLSL).

The protein belongs to the complex I subunit 1 family. As to quaternary structure, NDH is composed of at least 16 different subunits, 5 of which are encoded in the nucleus.

It is found in the plastid. It localises to the chloroplast thylakoid membrane. It carries out the reaction a plastoquinone + NADH + (n+1) H(+)(in) = a plastoquinol + NAD(+) + n H(+)(out). It catalyses the reaction a plastoquinone + NADPH + (n+1) H(+)(in) = a plastoquinol + NADP(+) + n H(+)(out). NDH shuttles electrons from NAD(P)H:plastoquinone, via FMN and iron-sulfur (Fe-S) centers, to quinones in the photosynthetic chain and possibly in a chloroplast respiratory chain. The immediate electron acceptor for the enzyme in this species is believed to be plastoquinone. Couples the redox reaction to proton translocation, and thus conserves the redox energy in a proton gradient. The sequence is that of NAD(P)H-quinone oxidoreductase subunit 1, chloroplastic from Draba nemorosa (Woodland whitlowgrass).